We begin with the raw amino-acid sequence, 638 residues long: Phosphomethylpyrimidine synthase (638 aa).

Substrate contacts are provided by residues Asn-243, Met-272, Tyr-301, His-337, 357–359 (SRG), 398–401 (DGLR), and Glu-437. His-441 serves as a coordination point for Zn(2+). Tyr-464 contacts substrate. His-505 contacts Zn(2+). [4Fe-4S] cluster contacts are provided by Cys-585, Cys-588, and Cys-593.

The protein belongs to the ThiC family. In terms of assembly, homodimer. [4Fe-4S] cluster serves as cofactor.

It carries out the reaction 5-amino-1-(5-phospho-beta-D-ribosyl)imidazole + S-adenosyl-L-methionine = 4-amino-2-methyl-5-(phosphooxymethyl)pyrimidine + CO + 5'-deoxyadenosine + formate + L-methionine + 3 H(+). The protein operates within cofactor biosynthesis; thiamine diphosphate biosynthesis. Catalyzes the synthesis of the hydroxymethylpyrimidine phosphate (HMP-P) moiety of thiamine from aminoimidazole ribotide (AIR) in a radical S-adenosyl-L-methionine (SAM)-dependent reaction. This is Phosphomethylpyrimidine synthase from Dechloromonas aromatica (strain RCB).